The following is a 279-amino-acid chain: Bifunctional protein FolD 1 (279 aa).

Residues 166–168 (GRS) and Ser-191 each bind NADP(+).

This sequence belongs to the tetrahydrofolate dehydrogenase/cyclohydrolase family. As to quaternary structure, homodimer.

It carries out the reaction (6R)-5,10-methylene-5,6,7,8-tetrahydrofolate + NADP(+) = (6R)-5,10-methenyltetrahydrofolate + NADPH. The catalysed reaction is (6R)-5,10-methenyltetrahydrofolate + H2O = (6R)-10-formyltetrahydrofolate + H(+). Its pathway is one-carbon metabolism; tetrahydrofolate interconversion. Catalyzes the oxidation of 5,10-methylenetetrahydrofolate to 5,10-methenyltetrahydrofolate and then the hydrolysis of 5,10-methenyltetrahydrofolate to 10-formyltetrahydrofolate. This is Bifunctional protein FolD 1 from Salinispora arenicola (strain CNS-205).